The following is a 526-amino-acid chain: Glucose-6-phosphate isomerase (526 aa).

The Proton donor role is filled by E320. Residues H349 and K453 contribute to the active site.

The protein belongs to the GPI family.

It is found in the cytoplasm. It carries out the reaction alpha-D-glucose 6-phosphate = beta-D-fructose 6-phosphate. It participates in carbohydrate biosynthesis; gluconeogenesis. The protein operates within carbohydrate degradation; glycolysis; D-glyceraldehyde 3-phosphate and glycerone phosphate from D-glucose: step 2/4. Catalyzes the reversible isomerization of glucose-6-phosphate to fructose-6-phosphate. The chain is Glucose-6-phosphate isomerase from Gloeothece citriformis (strain PCC 7424) (Cyanothece sp. (strain PCC 7424)).